Here is a 480-residue protein sequence, read N- to C-terminus: Docking protein 1 (480 aa).

Residue methionine 1 is modified to N-acetylmethionine. Positions 3–119 (GALMEGPLFL…WVQILCRTAF (117 aa)) constitute a PH domain. Serine 48 bears the Phosphoserine mark. Residues 151–259 (EGSQFWVTSQ…QQQKAQGKVG (109 aa)) form the IRS-type PTB domain. The span at 253-262 (KAQGKVGQGQ) shows a compositional bias: low complexity. Residues 253–328 (KAQGKVGQGQ…GSTPAGAGEG (76 aa)) are disordered. The span at 265–276 (TRTDSHDGETEG) shows a compositional bias: basic and acidic residues. Phosphoserine is present on residues serine 269 and serine 290. Tyrosine 295, tyrosine 336, and tyrosine 340 each carry phosphotyrosine. Tyrosine 361 is subject to Phosphotyrosine; by INSR. Residue tyrosine 376 is modified to Phosphotyrosine. A Phosphotyrosine; by INSR modification is found at tyrosine 397. Residues 398–480 (ELPYNPATDD…RVGVKSEGST (83 aa)) form a disordered region. Tyrosine 408 is modified (phosphotyrosine). A compositionally biased stretch (pro residues) spans 410-423 (VPPPRSSKPTPAPK). Phosphoserine is present on serine 415. Low complexity predominate over residues 432-445 (SGTTAGSGSKGSDT). The segment covering 446 to 455 (ALYSQVQKSG) has biased composition (polar residues). Tyrosine 448 is modified (phosphotyrosine).

It belongs to the DOK family. Type A subfamily. As to quaternary structure, interacts with RasGAP and INPP5D/SHIP1. Interacts directly with phosphorylated ITGB3. Interacts with SRMS (via the SH2 and SH3 domains). Post-translationally, constitutively tyrosine-phosphorylated. Phosphorylated by TEC. Phosphorylated by LYN. Phosphorylated on tyrosine residues by the insulin receptor kinase. Results in the negative regulation of the insulin signaling pathway. Phosphorylated on tyrosine residues by SRMS.

The protein resides in the cytoplasm. The protein localises to the nucleus. Functionally, DOK proteins are enzymatically inert adaptor or scaffolding proteins. They provide a docking platform for the assembly of multimolecular signaling complexes. DOK1 appears to be a negative regulator of the insulin signaling pathway. Modulates integrin activation by competing with talin for the same binding site on ITGB3. In Rattus norvegicus (Rat), this protein is Docking protein 1 (Dok1).